The chain runs to 391 residues: Small ribosomal subunit protein bS1 (391 aa).

S1 motif domains follow at residues 16–90 (GDKV…LSRR), 108–173 (NEII…LSRK), 194–262 (GDVI…LSIK), and 279–348 (NDVI…LSIK).

It belongs to the bacterial ribosomal protein bS1 family.

Functionally, binds mRNA; thus facilitating recognition of the initiation point. It is needed to translate mRNA with a short Shine-Dalgarno (SD) purine-rich sequence. This chain is Small ribosomal subunit protein bS1 (rpsA), found in Staphylococcus aureus (strain MSSA476).